The following is a 403-amino-acid chain: tRNA(Met) cytidine acetate ligase (403 aa).

ATP is bound by residues 7-20 (IVEY…HLYH), Gly102, Asn168, and Arg193.

Belongs to the TmcAL family.

It is found in the cytoplasm. The enzyme catalyses cytidine(34) in elongator tRNA(Met) + acetate + ATP = N(4)-acetylcytidine(34) in elongator tRNA(Met) + AMP + diphosphate. Functionally, catalyzes the formation of N(4)-acetylcytidine (ac(4)C) at the wobble position of elongator tRNA(Met), using acetate and ATP as substrates. First activates an acetate ion to form acetyladenylate (Ac-AMP) and then transfers the acetyl group to tRNA to form ac(4)C34. The protein is tRNA(Met) cytidine acetate ligase of Clostridium tetani (strain Massachusetts / E88).